We begin with the raw amino-acid sequence, 374 residues long: Carbamoyl phosphate synthase small chain (374 aa).

Residues 1-186 (MTEPAILVLE…DRNEWKRAAP (186 aa)) are CPSase. L-glutamine-binding residues include S47, G237, and G239. Residues 189–374 (KVVAYDYGVK…RFITMMAAQS (186 aa)) form the Glutamine amidotransferase type-1 domain. The Nucleophile role is filled by C265. The L-glutamine site is built by L266, Q269, N307, G309, and F310. Residues H349 and E351 contribute to the active site.

Belongs to the CarA family. In terms of assembly, composed of two chains; the small (or glutamine) chain promotes the hydrolysis of glutamine to ammonia, which is used by the large (or ammonia) chain to synthesize carbamoyl phosphate. Tetramer of heterodimers (alpha,beta)4.

It carries out the reaction hydrogencarbonate + L-glutamine + 2 ATP + H2O = carbamoyl phosphate + L-glutamate + 2 ADP + phosphate + 2 H(+). It catalyses the reaction L-glutamine + H2O = L-glutamate + NH4(+). It functions in the pathway amino-acid biosynthesis; L-arginine biosynthesis; carbamoyl phosphate from bicarbonate: step 1/1. It participates in pyrimidine metabolism; UMP biosynthesis via de novo pathway; (S)-dihydroorotate from bicarbonate: step 1/3. Small subunit of the glutamine-dependent carbamoyl phosphate synthetase (CPSase). CPSase catalyzes the formation of carbamoyl phosphate from the ammonia moiety of glutamine, carbonate, and phosphate donated by ATP, constituting the first step of 2 biosynthetic pathways, one leading to arginine and/or urea and the other to pyrimidine nucleotides. The small subunit (glutamine amidotransferase) binds and cleaves glutamine to supply the large subunit with the substrate ammonia. The protein is Carbamoyl phosphate synthase small chain of Xylella fastidiosa (strain 9a5c).